The primary structure comprises 102 residues: Small ribosomal subunit protein uS10 (102 aa).

This sequence belongs to the universal ribosomal protein uS10 family. As to quaternary structure, part of the 30S ribosomal subunit.

Its function is as follows. Involved in the binding of tRNA to the ribosomes. This chain is Small ribosomal subunit protein uS10, found in Staphylococcus saprophyticus subsp. saprophyticus (strain ATCC 15305 / DSM 20229 / NCIMB 8711 / NCTC 7292 / S-41).